A 500-amino-acid chain; its full sequence is MNSISALFSAGGFQWILLSLSLAFIVVYSLFYLAVGLYNLYFHPLARYPGPLLGRASSLWYARSLARGTVAQDTLKLHEKYGDVVRIAPDELSFIQPENWSAIYGHQLGKDYRELIKDPRYHDTVKPTPTILTGDWDEHTFYRKILSNSFSEKSLKDQEHILHHFVDLFVQRLKETSAEGTRELNMTDQWNYLTFDVIGFLTYGEEFHCLTSSKLHDWIEAMLCVAILMSLGQAARHLPFPFDKIYKQWAIPSNVKRQVALHRDLTEVAIPHIPIQYASAYRLNSRKGDIPYSVLKEHANILTIGGSETTATLLAGATFHLGKNPPVLQKLATEIRTTFVNDGEITVARLSECKYLLATVEECLRIYPPSPANHTRMVPKEGIVLNDQHIPGGIGVGMPMYAAFRASSNFTYPDRFAPERWLGDPMYSKDKKGALQPFSFGPRNCLGRHLAYQEIKLALAKLVYHFDLELNPKCGDWDEQKNFTFWVKPPLWVNLHPVKS.

Residues 15–35 form a helical membrane-spanning segment; that stretch reads WILLSLSLAFIVVYSLFYLAV. 4 N-linked (GlcNAc...) asparagine glycosylation sites follow: N99, N185, N373, and N409. C445 provides a ligand contact to heme. The N-linked (GlcNAc...) asparagine glycan is linked to N482.

This sequence belongs to the cytochrome P450 family. Requires heme as cofactor.

It is found in the membrane. It functions in the pathway secondary metabolite biosynthesis. Functionally, cytochrome P450 monooxygenase; part of the gene cluster that mediates the biosynthesis of heptelidic acid (HA), a sesquiterpene lactone that acts as an inhibitor of glyceraldehyde-3-phosphatedehydrogenase (GAPDH) and a growth inhibitor of the salt-tolerant lactic acid bacteria in soy sauce brewing. This chain is Cytochrome P450 monooxygenase hepD, found in Aspergillus oryzae (strain ATCC 42149 / RIB 40) (Yellow koji mold).